A 427-amino-acid polypeptide reads, in one-letter code: Adenylosuccinate synthetase (427 aa).

Residues 12–18 (GDEGKGK) and 40–42 (GHT) contribute to the GTP site. Asp-13 functions as the Proton acceptor in the catalytic mechanism. Mg(2+) contacts are provided by Asp-13 and Gly-40. IMP contacts are provided by residues 13–16 (DEGK), 38–41 (NAGH), Thr-126, Arg-140, Gln-221, Thr-236, and Arg-299. The active-site Proton donor is His-41. 295–301 (STTNRPR) lines the substrate pocket. Residues Arg-301, 327 to 329 (KLD), and 409 to 411 (SLG) each bind GTP.

This sequence belongs to the adenylosuccinate synthetase family. Homodimer. Requires Mg(2+) as cofactor.

The protein resides in the cytoplasm. It carries out the reaction IMP + L-aspartate + GTP = N(6)-(1,2-dicarboxyethyl)-AMP + GDP + phosphate + 2 H(+). It participates in purine metabolism; AMP biosynthesis via de novo pathway; AMP from IMP: step 1/2. Plays an important role in the de novo pathway of purine nucleotide biosynthesis. Catalyzes the first committed step in the biosynthesis of AMP from IMP. This chain is Adenylosuccinate synthetase, found in Borrelia turicatae (strain 91E135).